The following is a 418-amino-acid chain: Argininosuccinate synthase (418 aa).

16–24 (AYSGGLDTS) contacts ATP. An L-citrulline-binding site is contributed by Y95. ATP is bound at residue G125. L-aspartate contacts are provided by T127, N131, and D132. N131 provides a ligand contact to L-citrulline. L-citrulline contacts are provided by R135, S183, E267, and Y279.

The protein belongs to the argininosuccinate synthase family. Type 1 subfamily. In terms of assembly, homotetramer.

The protein localises to the cytoplasm. The enzyme catalyses L-citrulline + L-aspartate + ATP = 2-(N(omega)-L-arginino)succinate + AMP + diphosphate + H(+). The protein operates within amino-acid biosynthesis; L-arginine biosynthesis; L-arginine from L-ornithine and carbamoyl phosphate: step 2/3. This Bifidobacterium adolescentis (strain ATCC 15703 / DSM 20083 / NCTC 11814 / E194a) protein is Argininosuccinate synthase.